Here is a 167-residue protein sequence, read N- to C-terminus: Crossover junction endodeoxyribonuclease RuvC (167 aa).

Active-site residues include D7, E67, and D140. Mg(2+) contacts are provided by D7, E67, and D140.

It belongs to the RuvC family. Homodimer which binds Holliday junction (HJ) DNA. The HJ becomes 2-fold symmetrical on binding to RuvC with unstacked arms; it has a different conformation from HJ DNA in complex with RuvA. In the full resolvosome a probable DNA-RuvA(4)-RuvB(12)-RuvC(2) complex forms which resolves the HJ. Mg(2+) serves as cofactor.

The protein resides in the cytoplasm. It catalyses the reaction Endonucleolytic cleavage at a junction such as a reciprocal single-stranded crossover between two homologous DNA duplexes (Holliday junction).. The RuvA-RuvB-RuvC complex processes Holliday junction (HJ) DNA during genetic recombination and DNA repair. Endonuclease that resolves HJ intermediates. Cleaves cruciform DNA by making single-stranded nicks across the HJ at symmetrical positions within the homologous arms, yielding a 5'-phosphate and a 3'-hydroxyl group; requires a central core of homology in the junction. The consensus cleavage sequence is 5'-(A/T)TT(C/G)-3'. Cleavage occurs on the 3'-side of the TT dinucleotide at the point of strand exchange. HJ branch migration catalyzed by RuvA-RuvB allows RuvC to scan DNA until it finds its consensus sequence, where it cleaves and resolves the cruciform DNA. The protein is Crossover junction endodeoxyribonuclease RuvC of Dehalococcoides mccartyi (strain ATCC BAA-2100 / JCM 16839 / KCTC 5957 / BAV1).